Reading from the N-terminus, the 251-residue chain is L,D-transpeptidase 1 (251 aa).

Positions 1-28 are cleaved as a signal peptide; the sequence is MRRVVRYLSVVVAITLMLTAESVSIATA. A L,D-TPase catalytic domain is found at 125 to 250; that stretch reads LIGVASISAH…VTVGDPIEVV (126 aa). Substrate-binding positions include Y190 and 203–204; that span reads SG. H208 acts as the Proton donor/acceptor in catalysis. C226 (nucleophile) is an active-site residue. N228 provides a ligand contact to substrate.

In terms of assembly, monomer.

The protein localises to the periplasm. It functions in the pathway cell wall biogenesis; peptidoglycan biosynthesis. Its activity is regulated as follows. Is irreversibly inactivated by the beta-lactams carbapenems via the formation of a covalent adduct resulting from acylation of the catalytic Cys. Its function is as follows. Generates 3-&gt;3 cross-links in peptidoglycan, catalyzing the cleavage of the mDap(3)-D-Ala(4) bond of a tetrapeptide donor stem and the formation of a bond between the carbonyl of mDap(3) of the donor stem and the side chain of mDap(3) of the acceptor stem. Is specific for donor substrates containing a stem tetrapeptide since it cannot use pentapeptide stems. This is L,D-transpeptidase 1 (ldtA) from Mycobacterium tuberculosis (strain CDC 1551 / Oshkosh).